The following is a 252-amino-acid chain: Curing of [URE3] protein 1 (252 aa).

The protein localises to the nucleus. Functionally, involved in the curing of prion [URE3]. Nuclear localization of this protein may suggest a role in transcription regulation, so it might exert an effect on [URE3] through known prion-curing chaperones or BTN2. This chain is Curing of [URE3] protein 1 (CUR1), found in Saccharomyces cerevisiae (strain ATCC 204508 / S288c) (Baker's yeast).